Here is a 156-residue protein sequence, read N- to C-terminus: Transcription elongation factor GreA (156 aa).

Residues E44–Q67 adopt a coiled-coil conformation.

It belongs to the GreA/GreB family.

In terms of biological role, necessary for efficient RNA polymerase transcription elongation past template-encoded arresting sites. The arresting sites in DNA have the property of trapping a certain fraction of elongating RNA polymerases that pass through, resulting in locked ternary complexes. Cleavage of the nascent transcript by cleavage factors such as GreA or GreB allows the resumption of elongation from the new 3'terminus. GreA releases sequences of 2 to 3 nucleotides. The protein is Transcription elongation factor GreA of Syntrophobacter fumaroxidans (strain DSM 10017 / MPOB).